A 509-amino-acid chain; its full sequence is Maturase K (509 aa).

Belongs to the intron maturase 2 family. MatK subfamily.

It is found in the plastid. Its subcellular location is the chloroplast. Functionally, usually encoded in the trnK tRNA gene intron. Probably assists in splicing its own and other chloroplast group II introns. This Hottonia palustris (Water-violet) protein is Maturase K.